Reading from the N-terminus, the 260-residue chain is Carbonic anhydrase 3 (260 aa).

Ala2 is modified (N-acetylalanine). In terms of domain architecture, Alpha-carbonic anhydrase spans 3–259 (KEWGYASHNG…INNRVVRASF (257 aa)). Phosphoserine occurs at positions 29, 43, 48, 50, and 55. Positions 64–67 (KTCR) are involved in proton transfer. Thr73 carries the post-translational modification Phosphothreonine. His94, His96, and His119 together coordinate Zn(2+). The residue at position 127 (Tyr127) is a Phosphotyrosine. Phosphothreonine is present on residues Thr129 and Thr176. An S-glutathionyl cysteine mark is found at Cys182 and Cys187. Residue 198 to 199 (TT) participates in substrate binding. Thr216 carries the post-translational modification Phosphothreonine. Ser219 is modified (phosphoserine).

It belongs to the alpha-carbonic anhydrase family. Zn(2+) serves as cofactor. In terms of processing, S-thiolated both by thiol-disulfide exchange with glutathione disulfide and by oxyradical-initiated S-thiolation with reduced glutathione. S-glutathionylated in hepatocytes under oxidative stress. As to expression, muscle specific.

Its subcellular location is the cytoplasm. The enzyme catalyses hydrogencarbonate + H(+) = CO2 + H2O. Activated by proton donors such as imidazole and the dipeptide histidylhistidine. Inhibited by coumarins and sulfonamide derivatives such as acetazolamide. Functionally, reversible hydration of carbon dioxide. In Homo sapiens (Human), this protein is Carbonic anhydrase 3.